A 345-amino-acid polypeptide reads, in one-letter code: Uroporphyrinogen decarboxylase (345 aa).

Residues 27-31 (RQAGR), Phe46, Asp76, Tyr152, Ser207, and His320 contribute to the substrate site.

This sequence belongs to the uroporphyrinogen decarboxylase family. Homodimer.

The protein localises to the cytoplasm. It carries out the reaction uroporphyrinogen III + 4 H(+) = coproporphyrinogen III + 4 CO2. The protein operates within porphyrin-containing compound metabolism; protoporphyrin-IX biosynthesis; coproporphyrinogen-III from 5-aminolevulinate: step 4/4. In terms of biological role, catalyzes the decarboxylation of four acetate groups of uroporphyrinogen-III to yield coproporphyrinogen-III. This Oceanobacillus iheyensis (strain DSM 14371 / CIP 107618 / JCM 11309 / KCTC 3954 / HTE831) protein is Uroporphyrinogen decarboxylase.